Here is a 260-residue protein sequence, read N- to C-terminus: Cytochrome c oxidase subunit 2 (260 aa).

Over 1 to 43 (MILRSLSCRFLTIALCDAAEPWQLGFQDAATPMMQGIIDLHHD) the chain is Mitochondrial intermembrane. A helical transmembrane segment spans residues 44 to 64 (IFFFLILILVFVLWMLVRALW). At 65–84 (HFNEQTNPIPQRIVHGTTIE) the chain is on the mitochondrial matrix side. Residues 85-105 (IIWTIFPSVILLFIAIPSFAL) form a helical membrane-spanning segment. The Mitochondrial intermembrane portion of the chain corresponds to 106 to 260 (LYSMDGVLVD…VSNQLILQTN (155 aa)). 6 residues coordinate Cu cation: histidine 189, cysteine 224, glutamate 226, cysteine 228, histidine 232, and methionine 235. Glutamate 226 lines the Mg(2+) pocket.

The protein belongs to the cytochrome c oxidase subunit 2 family. In terms of assembly, component of the cytochrome c oxidase (complex IV, CIV), a multisubunit enzyme composed of a catalytic core of 3 subunits and several supernumerary subunits. The complex exists as a monomer or a dimer and forms supercomplexes (SCs) in the inner mitochondrial membrane with ubiquinol-cytochrome c oxidoreductase (cytochrome b-c1 complex, complex III, CIII). Cu cation is required as a cofactor.

It is found in the mitochondrion inner membrane. The enzyme catalyses 4 Fe(II)-[cytochrome c] + O2 + 8 H(+)(in) = 4 Fe(III)-[cytochrome c] + 2 H2O + 4 H(+)(out). In terms of biological role, component of the cytochrome c oxidase, the last enzyme in the mitochondrial electron transport chain which drives oxidative phosphorylation. The respiratory chain contains 3 multisubunit complexes succinate dehydrogenase (complex II, CII), ubiquinol-cytochrome c oxidoreductase (cytochrome b-c1 complex, complex III, CIII) and cytochrome c oxidase (complex IV, CIV), that cooperate to transfer electrons derived from NADH and succinate to molecular oxygen, creating an electrochemical gradient over the inner membrane that drives transmembrane transport and the ATP synthase. Cytochrome c oxidase is the component of the respiratory chain that catalyzes the reduction of oxygen to water. Electrons originating from reduced cytochrome c in the intermembrane space (IMS) are transferred via the dinuclear copper A center (CU(A)) of subunit 2 and heme A of subunit 1 to the active site in subunit 1, a binuclear center (BNC) formed by heme A3 and copper B (CU(B)). The BNC reduces molecular oxygen to 2 water molecules using 4 electrons from cytochrome c in the IMS and 4 protons from the mitochondrial matrix. The polypeptide is Cytochrome c oxidase subunit 2 (COX2) (Triticum aestivum (Wheat)).